We begin with the raw amino-acid sequence, 286 residues long: Protein HEXIM2 (286 aa).

The segment covering 1 to 11 (MMATPNQTACN) has biased composition (polar residues). The disordered stretch occupies residues 1 to 195 (MMATPNQTAC…GEFQRKDFSE (195 aa)). Phosphoserine is present on S29. T32 is modified (phosphothreonine). The residue at position 39 (S39) is a Phosphoserine. T46 carries the phosphothreonine modification. Phosphoserine occurs at positions 51, 53, 71, 76, and 81. A compositionally biased stretch (polar residues) spans 68–78 (NSRSPRTQSPG). Residues 87–103 (ARKKHRRRPSKRKRHWR) show a composition bias toward basic residues. Residues 113–132 (KQQRDERQSQRASRVREEMF) show a composition bias toward basic and acidic residues. Residues 140–143 (PYNT) form an interaction with P-TEFb region. Positions 178-195 (SDGRGRAHGEFQRKDFSE) are enriched in basic and acidic residues. Residues 207–277 (GRSKQELVRD…QENQMWNREG (71 aa)) adopt a coiled-coil conformation. Residues 226-286 (QAEEETRRLQ…GCRCDEEPGT (61 aa)) are interaction with CCNT1, HEXIM1 and HEXIM2.

The protein belongs to the HEXIM family. Homooligomer and heterooligomer with HEXIM1; probably dimeric. Core component of the 7SK RNP complex, at least composed of 7SK RNA, LARP7, MEPCE, HEXIM1 (or HEXIM2) and P-TEFb (composed of CDK9 and CCNT1/cyclin-T1). Interacts with CCNT2. In terms of tissue distribution, ubiquitously expressed with higher expression in testis. HEXIM1 and HEXIM2 are differentially expressed.

The protein localises to the nucleus. Its function is as follows. Transcriptional regulator which functions as a general RNA polymerase II transcription inhibitor. Core component of the 7SK RNP complex: in cooperation with 7SK snRNA sequesters P-TEFb in a large inactive 7SK snRNP complex preventing RNA polymerase II phosphorylation and subsequent transcriptional elongation. The protein is Protein HEXIM2 (HEXIM2) of Homo sapiens (Human).